A 94-amino-acid polypeptide reads, in one-letter code: Large ribosomal subunit protein bL25 (94 aa).

It belongs to the bacterial ribosomal protein bL25 family. In terms of assembly, part of the 50S ribosomal subunit; part of the 5S rRNA/L5/L18/L25 subcomplex. Contacts the 5S rRNA. Binds to the 5S rRNA independently of L5 and L18.

Functionally, this is one of the proteins that binds to the 5S RNA in the ribosome where it forms part of the central protuberance. The protein is Large ribosomal subunit protein bL25 of Citrobacter koseri (strain ATCC BAA-895 / CDC 4225-83 / SGSC4696).